Here is a 486-residue protein sequence, read N- to C-terminus: ATP synthase subunit beta (486 aa).

G164–T171 contacts ATP.

It belongs to the ATPase alpha/beta chains family. As to quaternary structure, F-type ATPases have 2 components, CF(1) - the catalytic core - and CF(0) - the membrane proton channel. CF(1) has five subunits: alpha(3), beta(3), gamma(1), delta(1), epsilon(1). CF(0) has four main subunits: a(1), b(1), b'(1) and c(9-12).

Its subcellular location is the cellular thylakoid membrane. The enzyme catalyses ATP + H2O + 4 H(+)(in) = ADP + phosphate + 5 H(+)(out). Produces ATP from ADP in the presence of a proton gradient across the membrane. The catalytic sites are hosted primarily by the beta subunits. The protein is ATP synthase subunit beta of Prochlorococcus marinus (strain AS9601).